Consider the following 32-residue polypeptide: Cytochrome b6-f complex subunit 7 (32 aa).

The chain crosses the membrane as a helical span at residues 9-27; sequence AAVFWVLIPVGLLGGVLLL.

This sequence belongs to the PetM family. In terms of assembly, the 4 large subunits of the cytochrome b6-f complex are cytochrome b6, subunit IV (17 kDa polypeptide, PetD), cytochrome f and the Rieske protein, while the 4 small subunits are PetG, PetL, PetM and PetN. The complex functions as a dimer.

The protein localises to the cellular thylakoid membrane. In terms of biological role, component of the cytochrome b6-f complex, which mediates electron transfer between photosystem II (PSII) and photosystem I (PSI), cyclic electron flow around PSI, and state transitions. This Prochlorococcus marinus (strain NATL1A) protein is Cytochrome b6-f complex subunit 7.